A 605-amino-acid polypeptide reads, in one-letter code: Glucose oxidase (605 aa).

The signal sequence occupies residues 1–16 (MQTLLVSSLVVSLAAA). Residues Leu-51 and Thr-52 each contribute to the FAD site. N-linked (GlcNAc...) asparagine glycosylation is present at Asn-65. Position 72 (Glu-72) interacts with FAD. N-linked (GlcNAc...) asparagine glycosylation occurs at Asn-111. FAD is bound by residues Ser-125, Asn-129, Gly-130, and Thr-132. N-linked (GlcNAc...) asparagine glycans are attached at residues Asn-183 and Asn-190. Cysteines 186 and 228 form a disulfide. Val-272 contacts FAD. 4 N-linked (GlcNAc...) asparagine glycosylation sites follow: Asn-280, Asn-377, Asn-410, and Asn-495. His-538 functions as the Proton acceptor in the catalytic mechanism. The O2 site is built by Arg-559 and Val-560. Residues Gly-571 and Met-583 each coordinate FAD.

It belongs to the GMC oxidoreductase family. In terms of assembly, homodimer. FAD serves as cofactor. The N-linked sugar chains of the glucose oxidase contributed to the high solubility of the enzyme in water.

The protein resides in the secreted. Its subcellular location is the cell wall. The protein localises to the cytoplasm. It is found in the extracellular space. It localises to the extracellular matrix. The catalysed reaction is beta-D-glucose + O2 = D-glucono-1,5-lactone + H2O2. Glucose oxidase catalyzes the oxidation of beta-D-glucose to D-glucono-delta-lactone and hydrogen peroxide in the presence of molecular oxygen. D-glucono-delta-lactone is sequentially hydrolyzed by lactonase to D-gluconic acid, and the resulting hydrogen peroxide is hydrolyzed by catalase to oxygen and water. The activity shows high specificity to beta-D-glucose, with very low to no activity towards L-glucose, 2-deoxy-D-glucose, 3-deoxy-D-glucose, 4-deoxy-D-glucose, 5-deoxy-D-glucose, 6-deoxy-D-glucose, 3-O-methyl-D-glucose, 4-O-methyl-D-glucose, 6-O-methyl-D-glucose, 4,6-O-benzylidene-D-glucose, 5-thio-5-deoxy-D-glucose, D-mannose, D-allose, D-galactose, D-fructose, D-arabinose, D-xylose, trehalose, melibiose, L-mannomethylose, lactose, sucrose or 1,5-anhydro-D-glucitol. The protein is Glucose oxidase of Aspergillus niger.